The primary structure comprises 463 residues: Toxin CaTX-A (463 aa).

A signal peptide spans 1 to 18 (MSRGYSLHLVLFLVLSTA).

Belongs to the jellyfish toxin family. Type II subfamily. In terms of assembly, oligomer. In terms of processing, contains disulfide bonds. It is suggested that CaTX-B is synthesized in the tentacle, is modified (become CaTX-A) and then migrates to the nematocyst.

Its subcellular location is the secreted. It is found in the nematocyst. It localises to the target cell membrane. Functionally, has potent hemolytic activity. Is lethal to crayfish. Causes cutaneous inflammation in humans. May act as a pore-forming toxin, disrupting normal transmembrane ion concentration gradients in susceptible cells. This chain is Toxin CaTX-A, found in Carybdea alata (Hawaiian box jellyfish).